The primary structure comprises 1195 residues: Error-prone DNA polymerase (1195 aa).

The tract at residues 1163–1195 is disordered; it reads ALNGDRRDTPDAPAQRHRHPRDVRILPPSRDFH.

This sequence belongs to the DNA polymerase type-C family. DnaE2 subfamily.

It is found in the cytoplasm. The catalysed reaction is DNA(n) + a 2'-deoxyribonucleoside 5'-triphosphate = DNA(n+1) + diphosphate. Functionally, DNA polymerase involved in damage-induced mutagenesis and translesion synthesis (TLS). It is not the major replicative DNA polymerase. In Rhodopseudomonas palustris (strain ATCC BAA-98 / CGA009), this protein is Error-prone DNA polymerase.